We begin with the raw amino-acid sequence, 220 residues long: Ribonuclease P protein subunit p29 (220 aa).

Ser-10 is modified (phosphoserine).

This sequence belongs to the eukaryotic/archaeal RNase P protein component 1 family. In terms of assembly, component of nuclear RNase P and RNase MRP ribonucleoproteins. RNase P consists of a catalytic RNA moiety and 10 different protein chains; POP1, POP4, POP5, POP7, RPP14, RPP21, RPP25, RPP30, RPP38 and RPP40. Within the RNase P complex, POP1, POP7 and RPP25 form the 'finger' subcomplex, POP5, RPP14, RPP40 and homodimeric RPP30 form the 'palm' subcomplex, and RPP21, POP4 and RPP38 form the 'wrist' subcomplex. All subunits of the RNase P complex interact with the catalytic RNA. Several subunits of RNase P are also part of the RNase MRP complex. RNase MRP consists of a catalytic RNA moiety and about 8 protein subunits; POP1, POP7, RPP25, RPP30, RPP38, RPP40 and possibly also POP4 and POP5.

The protein localises to the nucleus. The protein resides in the nucleolus. Functionally, component of ribonuclease P, a ribonucleoprotein complex that generates mature tRNA molecules by cleaving their 5'-ends. In Pongo abelii (Sumatran orangutan), this protein is Ribonuclease P protein subunit p29 (POP4).